The chain runs to 128 residues: uncharacterized protein (128 aa).

The tract at residues 24 to 43 (KRTQNNTEQASRAINSPLQS) is disordered. Residues 26–43 (TQNNTEQASRAINSPLQS) are compositionally biased toward polar residues.

This is an uncharacterized protein from Homo sapiens (Human).